Here is a 121-residue protein sequence, read N- to C-terminus: Acidic phospholipase A2 SpII RP4 (121 aa).

7 disulfides stabilise this stretch: Cys25/Cys114, Cys27/Cys43, Cys42/Cys94, Cys48/Cys121, Cys49/Cys87, Cys56/Cys80, and Cys74/Cys85. 3 residues coordinate Ca(2+): Tyr26, Gly28, and Gly30. Residue His46 is part of the active site. Asp47 is a binding site for Ca(2+). The active site involves Asp88.

The cofactor is Ca(2+). Expressed by the venom gland.

The protein resides in the secreted. It catalyses the reaction a 1,2-diacyl-sn-glycero-3-phosphocholine + H2O = a 1-acyl-sn-glycero-3-phosphocholine + a fatty acid + H(+). Its function is as follows. Snake venom phospholipase A2 (PLA2) which exhibits indirect hemolysis, induces mild edema inflammation in the foot pads of mice and slightly delays anticoagulant activities. In mice, not lethal, even at the highest dose, and exhibits low to moderate myotoxicity on muscular fibers. PLA2 catalyzes the calcium-dependent hydrolysis of the 2-acyl groups in 3-sn-phosphoglycerides. In Bothrops alternatus (Urutu), this protein is Acidic phospholipase A2 SpII RP4.